A 376-amino-acid polypeptide reads, in one-letter code: Cell adhesion molecule CEACAM18 (376 aa).

A signal peptide spans methionine 1–glycine 30. The Extracellular segment spans residues glutamine 31–tyrosine 330. Asparagine 69, asparagine 95, and asparagine 110 each carry an N-linked (GlcNAc...) asparagine glycan. Positions proline 229–threonine 314 constitute an Ig-like C2-type domain. Cysteine 257 and cysteine 298 are joined by a disulfide. A helical membrane pass occupies residues isoleucine 331 to cysteine 351. Topologically, residues arginine 352–asparagine 376 are cytoplasmic.

This sequence belongs to the immunoglobulin superfamily. CEA family. In terms of tissue distribution, mostly expressed in the small and large intestine and at lower levels also in other organs.

Its subcellular location is the membrane. The chain is Cell adhesion molecule CEACAM18 from Mus musculus (Mouse).